Consider the following 349-residue polypeptide: Divinyl chlorophyll a/b light-harvesting protein PcbE (349 aa).

6 consecutive transmembrane segments (helical) span residues 27–47, 65–85, 88–108, 201–221, 241–261, and 308–328; these read FIAAHIAHTGLIAFAAGGSTL, IFLAHLASIGIGFDEAGAWTG, VASIAIVHLVLSMVYGAGGLL, VLGGHAFLAFLEITGGAFHIA, AILSFSCAGLGWMAVVAAFWC, and LANVHYYFGFFFLQGHLWHAL.

The protein belongs to the PsbB/PsbC family. IsiA/Pcb subfamily. As to quaternary structure, the antenna complex consists of divinyl chlorophylls (a and b) and divinyl chlorophyll a/b binding proteins and binds more divinyl chlorophyll b than does the antenna complex from high-light-adapted Prochlorococcus. Divinyl chlorophyll a is required as a cofactor. Requires divinyl chlorophyll b as cofactor.

The protein resides in the cellular thylakoid membrane. Its function is as follows. The antenna complex functions as a light receptor, it captures and delivers excitation energy to photosystems II and I. The Prochlorales pcb genes are not related to higher plant LHCs. This is Divinyl chlorophyll a/b light-harvesting protein PcbE (pcbE) from Prochlorococcus marinus (strain NATL2A).